We begin with the raw amino-acid sequence, 413 residues long: Peptide chain release factor 1, mitochondrial (413 aa).

The transit peptide at M1 to Y40 directs the protein to the mitochondrion. Q287 carries the post-translational modification N5-methylglutamine.

Belongs to the prokaryotic/mitochondrial release factor family. In terms of processing, methylation increases the termination efficiency of RF1. In terms of tissue distribution, mostly expressed in seedlings, stems and adult plants, and, to a lower extent, in siliques. Barely detected in etiolated seedlings and roots.

Its subcellular location is the mitochondrion. Peptide chain release factor 1 directs the termination of translation in response to the peptide chain termination codons UAG and UAA in mitochondria. The polypeptide is Peptide chain release factor 1, mitochondrial (Arabidopsis thaliana (Mouse-ear cress)).